A 657-amino-acid chain; its full sequence is Pentatricopeptide repeat-containing protein At1g11710, mitochondrial (657 aa).

The N-terminal 74 residues, 1–74 (MFGHVFSRRT…REFRSSPKLA (74 aa)), are a transit peptide targeting the mitochondrion. PPR repeat units lie at residues 147–181 (SPDV…GFCV), 182–216 (SVHA…GYVE), 217–251 (NVNT…GVWP), 252–282 (NVVS…MGMM), 290–324 (NAVT…GVDC), 325–359 (NERT…GLVV), 360–394 (NTVI…NMQI), 395–429 (DRFT…KLVE), 430–464 (DIVC…GLSL), 465–499 (DAIS…NKTS), 500–530 (NLVI…MEIK), 531–565 (DIVT…DGEK), 568–602 (SLVT…GVVP), and 603–637 (DSIT…GVTP).

This sequence belongs to the PPR family. P subfamily.

The protein resides in the mitochondrion. This chain is Pentatricopeptide repeat-containing protein At1g11710, mitochondrial, found in Arabidopsis thaliana (Mouse-ear cress).